A 164-amino-acid polypeptide reads, in one-letter code: Protein-export protein SecB (164 aa).

Belongs to the SecB family. In terms of assembly, homotetramer, a dimer of dimers. One homotetramer interacts with 1 SecA dimer.

The protein localises to the cytoplasm. One of the proteins required for the normal export of preproteins out of the cell cytoplasm. It is a molecular chaperone that binds to a subset of precursor proteins, maintaining them in a translocation-competent state. It also specifically binds to its receptor SecA. The chain is Protein-export protein SecB from Ruegeria sp. (strain TM1040) (Silicibacter sp.).